The sequence spans 515 residues: MNACASASSLHSLSPAVAPQEPYLLEVLNVSKGFPGVVALANVQLRVRPGTVLALMGENGAGKSTLMKIIAGIYQPDSGELRLKGRPVTFATPLAALQAGIAMIHQELNLMPHMSIAENIWIGREQQNRLGLIDHREMHRCTAALLARLRIELDPEEQVGNLSIAERQMVEIAKAVSYDSDVLIMDEPTSAITDKEVAHLFSIIADLKAQGKGIVYITHKMNEVFAIADEVAVFRDGAYIGLQRADSLDGDSLISMMVGRELSQLFPLREKPIGELLLKVRDLRLDGVFKGVSFDLHAGEILGIAGLMGSGRTNVAETLFGITPSDGGEIVLDGQPLRIGDPHRAIEKGLALLTEDRKLSGLFPCLSVLENMEVAVLPHYAGGGFVQQKALRALCEDMCRKLRVKTPSLEQCIDTLSGGNQQKALLARWLMTQPRILILDEPTRGIDVGAKAEIYRLIASLAGEGMAVIMISSELPEVLGMSDRVMVMHEGQLMGTLDRNEATQERVMQLASGLN.

ABC transporter domains lie at L25–E261 and L268–N515. G57–S64 is an ATP binding site.

The protein belongs to the ABC transporter superfamily. Carbohydrate importer 2 (CUT2) (TC 3.A.1.2) family.

Its subcellular location is the cell inner membrane. It carries out the reaction D-ribose(out) + ATP + H2O = D-ribose(in) + ADP + phosphate + H(+). The catalysed reaction is D-galactose(out) + ATP + H2O = D-galactose(in) + ADP + phosphate + H(+). Its function is as follows. Part of an ABC transporter complex involved in carbohydrate import. Could be involved in ribose, galactose and/or methyl galactoside import. Responsible for energy coupling to the transport system. The chain is Putative ribose/galactose/methyl galactoside import ATP-binding protein from Pseudomonas fluorescens (strain ATCC BAA-477 / NRRL B-23932 / Pf-5).